Here is a 105-residue protein sequence, read N- to C-terminus: Small ribosomal subunit protein eS24 (105 aa).

It belongs to the eukaryotic ribosomal protein eS24 family.

This is Small ribosomal subunit protein eS24 from Ignicoccus hospitalis (strain KIN4/I / DSM 18386 / JCM 14125).